The following is a 297-amino-acid chain: ATP synthase gamma chain (297 aa).

The protein belongs to the ATPase gamma chain family. As to quaternary structure, F-type ATPases have 2 components, CF(1) - the catalytic core - and CF(0) - the membrane proton channel. CF(1) has five subunits: alpha(3), beta(3), gamma(1), delta(1), epsilon(1). CF(0) has three main subunits: a, b and c.

The protein localises to the cell membrane. In terms of biological role, produces ATP from ADP in the presence of a proton gradient across the membrane. The gamma chain is believed to be important in regulating ATPase activity and the flow of protons through the CF(0) complex. The polypeptide is ATP synthase gamma chain (Micrococcus luteus (strain ATCC 4698 / DSM 20030 / JCM 1464 / CCM 169 / CCUG 5858 / IAM 1056 / NBRC 3333 / NCIMB 9278 / NCTC 2665 / VKM Ac-2230) (Micrococcus lysodeikticus)).